A 1015-amino-acid chain; its full sequence is Transposase for transposon Tn3 (1015 aa).

It belongs to the transposase 7 family.

In terms of biological role, required for transposition of transposon Tn3. The polypeptide is Transposase for transposon Tn3 (tnpA) (Escherichia coli).